A 159-amino-acid chain; its full sequence is Transcriptional repressor NrdR (159 aa).

A zinc finger lies at 3-34 (CPFCGAEDTSVVDSRISEEGARIRRRRRCVEC). Residues 49–139 (PQVIKQDGNR…VYRSFEDVGD (91 aa)) enclose the ATP-cone domain.

The protein belongs to the NrdR family. The cofactor is Zn(2+).

Its function is as follows. Negatively regulates transcription of bacterial ribonucleotide reductase nrd genes and operons by binding to NrdR-boxes. The sequence is that of Transcriptional repressor NrdR from Nitrosomonas europaea (strain ATCC 19718 / CIP 103999 / KCTC 2705 / NBRC 14298).